Here is a 192-residue protein sequence, read N- to C-terminus: Adenylate kinase (192 aa).

Residue 10–18 participates in ATP binding; the sequence is GVPGVGSTT.

The protein belongs to the archaeal adenylate kinase family. In terms of assembly, monomer.

It localises to the cytoplasm. The enzyme catalyses AMP + ATP = 2 ADP. In Methanocaldococcus jannaschii (strain ATCC 43067 / DSM 2661 / JAL-1 / JCM 10045 / NBRC 100440) (Methanococcus jannaschii), this protein is Adenylate kinase (adkA).